Consider the following 245-residue polypeptide: Neurovirulence factor ICP34.5 (245 aa).

Positions 1 to 15 (MARRRRRHRGPRRPR) are enriched in basic residues. The segment at 1-17 (MARRRRRHRGPRRPRPP) is required for nucleolar localization. Disordered regions lie at residues 1 to 122 (MARR…PFRL) and 143 to 172 (RRAGGEGAPKPPATPATPATPATPATPATP). A compositionally biased stretch (polar residues) spans 25–36 (TAQSQVTSTPNS). Residues 67-77 (ASDDDDDDDWP) show a composition bias toward acidic residues. 2 stretches are compositionally biased toward pro residues: residues 78–87 (DSPPPEPAPE) and 113–122 (SHPPSRPFRL). The Nuclear export signal signature appears at 122–131 (LPPRLALRLR). Tandem repeats lie at residues 155-157 (ATP), 158-160 (ATP), 161-163 (ATP), 164-166 (ATP), 167-169 (ATP), and 170-172 (ATP). A 6 X 3 AA tandem repeats of A-T-P region spans residues 155-172 (ATPATPATPATPATPATP). Residues 158–172 (ATPATPATPATPATP) show a composition bias toward low complexity. The segment at 172–185 (PARVRFSPHVRVRH) is binding to PP1CA. The tract at residues 172-185 (PARVRFSPHVRVRH) is interaction with host PPP1CA. An important for interferon resistance region spans residues 187–245 (VVWASAARLARRGSWARERADRARFRRRVAEAEAVIGPCLGPEARARALARGAGPANSV). Residues 197-215 (RRGSWARERADRARFRRRV) carry the Bipartite nuclear localization signal motif. Residues 215-230 (VAEAEAVIGPCLGPEA) form an interaction with host EIF2S1/EIF-2ALPHA region.

This sequence belongs to the PPP1R15 family. In terms of assembly, interacts with host PPP1CA to form a high-molecular-weight complex that dephosphorylates EIF2S1/eIF-2alpha. Interacts with host EIF2S1/eIF-2alpha; this interaction is crucial for the specific dephosphorylation of EIF2S1/eIF-2alpha by PPP1CA. Binds to proliferating cell nuclear antigen (PCNA), which may release host cells from growth arrest and facilitate viral replication. Interacts (via N-terminus) with host C1QBP and PRKCA. Interacts with protein UL31. Interacts with host TBK1. Interacts with host STING/TMEM173; this interaction inhibits the intracellular DNA sensing pathway. Interacts with host BECN1; this interaction modulates host autophagy.

The protein resides in the host cytoplasm. The protein localises to the host nucleus. Its subcellular location is the host nucleolus. It is found in the virion. In terms of biological role, inhibits the establishment of the immune response and of the integrated stress response (ISR) in the infected cell. Plays essential roles in viral nuclear egress to mediate capsid transit across the nuclear membrane. Facilitates nuclear egress cooperatively with host C1QBP and protein kinase C/PKC to induce lamin A/C phosphorylation and subsequent reorganization. In turn, lamina disassembles and nuclear egress occurs. Recruits the serine/threonine protein phosphatase PPP1CA/PP1-alpha to dephosphorylate the translation initiation factor EIF2S1/eIF-2alpha, thereby couteracting the host shutoff of protein synthesis involving double-stranded RNA-dependent protein kinase EIF2AK2/PKR. In turn, controls host IRF3 activation and subsequently inhibits host interferon response. Controls the DNA sensing pathway by interacting with and inhibiting host STING/TMEM173. Also down-modulates the host MHC class II proteins cell surface expression. Acts as a neurovirulence factor that has a profound effect on the growth of the virus in central nervous system tissue, by interacting with host BECN1 and thereby antagonizing the host autophagy response. The protein is Neurovirulence factor ICP34.5 (RL1) of Homo sapiens (Human).